Here is a 984-residue protein sequence, read N- to C-terminus: Calsyntenin-1 (984 aa).

The signal sequence occupies residues 1–18 (MRTAYFIFVGALLGVSYA). Over 19–850 (KHHHAARAPI…VGQGAIAGGA (832 aa)) the chain is Extracellular. 2 Cadherin domains span residues 66-142 (YLLT…APEI) and 143-257 (ENPW…APGV). N-linked (GlcNAc...) asparagine glycosylation is found at Asn206 and Asn305. Residues 851–871 (VAVVVVVCVGFLLVLLVIGVL) traverse the membrane as a helical segment. At 872 to 984 (KMRDTPMPRR…ISTNARSYRV (113 aa)) the chain is on the cytoplasmic side. The disordered stretch occupies residues 878-959 (MPRRRRQKRQ…QTEVLPHLDA (82 aa)). Over residues 886-896 (RQSDGGMHWDD) the composition is skewed to basic and acidic residues. The segment covering 918 to 951 (EFSDEEEEEETDGESECSYRDEEDDVSEDEEDQT) has biased composition (acidic residues).

This sequence belongs to the calsyntenin family. In terms of assembly, interacts with isoform c of daf-2 (daf-2c); promoting daf-2c localization to synaptic regions. Interacts with klc-2. Interacts with unc-104. Post-translationally, a proportion of the protein is proteolytically cleaved before the transmembrane domain in neurons, leading to release in the extracellular space. In terms of tissue distribution, widely expressed in the nervous system. Highly expressed in many head neurons, including most amphid sensory neurons. Also expressed in other tissues, such as intestine and gonadal sheath cells.

Its subcellular location is the golgi apparatus membrane. It is found in the perikaryon. The protein localises to the cell projection. The protein resides in the axon. It localises to the secreted. Its subcellular location is the synaptic cleft. Its function is as follows. Cell adhesion molecule involved in associative learning and memory. Acts as a regulator of GABAergic synaptic transmission at neuromuscular junctions by regulating GABA synaptic vesicle precursor transport: possibly functions as a cargo adapter for unc-104-mediated transport of synaptic vesicle precursors. Promotes localization of isoform c of daf-2 (daf-2c) to synaptic regions by acting as a signaling adapter between klc-2 and daf-2c. Acts as aregulator of glutamate signaling in the sensory neurons by inhibiting the activity of command interneurons, thereby negatively regulating motor circuit activity and locomotion. In Caenorhabditis elegans, this protein is Calsyntenin-1.